A 459-amino-acid polypeptide reads, in one-letter code: ATP synthase subunit beta (459 aa).

Position 147–154 (147–154 (GGAGVGKT)) interacts with ATP.

The protein belongs to the ATPase alpha/beta chains family. As to quaternary structure, F-type ATPases have 2 components, CF(1) - the catalytic core - and CF(0) - the membrane proton channel. CF(1) has five subunits: alpha(3), beta(3), gamma(1), delta(1), epsilon(1). CF(0) has three main subunits: a(1), b(2) and c(9-12). The alpha and beta chains form an alternating ring which encloses part of the gamma chain. CF(1) is attached to CF(0) by a central stalk formed by the gamma and epsilon chains, while a peripheral stalk is formed by the delta and b chains.

The protein localises to the cell inner membrane. The catalysed reaction is ATP + H2O + 4 H(+)(in) = ADP + phosphate + 5 H(+)(out). Produces ATP from ADP in the presence of a proton gradient across the membrane. The catalytic sites are hosted primarily by the beta subunits. This is ATP synthase subunit beta from Hydrogenovibrio crunogenus (strain DSM 25203 / XCL-2) (Thiomicrospira crunogena).